Reading from the N-terminus, the 604-residue chain is Threonine--tRNA ligase (604 aa).

The interval Asp197–Pro499 is catalytic. Zn(2+) contacts are provided by Cys296, His347, and His476.

This sequence belongs to the class-II aminoacyl-tRNA synthetase family. Homodimer. Requires Zn(2+) as cofactor.

The protein localises to the cytoplasm. It catalyses the reaction tRNA(Thr) + L-threonine + ATP = L-threonyl-tRNA(Thr) + AMP + diphosphate + H(+). Functionally, catalyzes the attachment of threonine to tRNA(Thr) in a two-step reaction: L-threonine is first activated by ATP to form Thr-AMP and then transferred to the acceptor end of tRNA(Thr). Also edits incorrectly charged L-seryl-tRNA(Thr). The chain is Threonine--tRNA ligase from Synechococcus elongatus (strain ATCC 33912 / PCC 7942 / FACHB-805) (Anacystis nidulans R2).